The sequence spans 60 residues: Large ribosomal subunit protein bL32 (60 aa).

The interval 1–25 (MAVQQNKKSPSKRGMHRSHNALNVP) is disordered. Over residues 9–19 (SPSKRGMHRSH) the composition is skewed to basic residues.

Belongs to the bacterial ribosomal protein bL32 family.

This is Large ribosomal subunit protein bL32 from Polaromonas naphthalenivorans (strain CJ2).